The following is a 930-amino-acid chain: Alanine--tRNA ligase (930 aa).

4 residues coordinate Zn(2+): H595, H599, C700, and H704.

Belongs to the class-II aminoacyl-tRNA synthetase family. Zn(2+) serves as cofactor.

It localises to the cytoplasm. The catalysed reaction is tRNA(Ala) + L-alanine + ATP = L-alanyl-tRNA(Ala) + AMP + diphosphate. In terms of biological role, catalyzes the attachment of alanine to tRNA(Ala) in a two-step reaction: alanine is first activated by ATP to form Ala-AMP and then transferred to the acceptor end of tRNA(Ala). Also edits incorrectly charged Ser-tRNA(Ala) and Gly-tRNA(Ala) via its editing domain. The polypeptide is Alanine--tRNA ligase (Malacoplasma penetrans (strain HF-2) (Mycoplasma penetrans)).